The sequence spans 78 residues: Small ribosomal subunit protein bS16 (78 aa).

The protein belongs to the bacterial ribosomal protein bS16 family.

The chain is Small ribosomal subunit protein bS16 from Thermodesulfovibrio yellowstonii (strain ATCC 51303 / DSM 11347 / YP87).